The sequence spans 545 residues: ATP synthase subunit alpha (545 aa).

Residue 174–181 (GDRKTGKT) participates in ATP binding.

It belongs to the ATPase alpha/beta chains family. As to quaternary structure, F-type ATPases have 2 components, CF(1) - the catalytic core - and CF(0) - the membrane proton channel. CF(1) has five subunits: alpha(3), beta(3), gamma(1), delta(1), epsilon(1). CF(0) has three main subunits: a(1), b(2) and c(9-12). The alpha and beta chains form an alternating ring which encloses part of the gamma chain. CF(1) is attached to CF(0) by a central stalk formed by the gamma and epsilon chains, while a peripheral stalk is formed by the delta and b chains.

It is found in the cell membrane. It catalyses the reaction ATP + H2O + 4 H(+)(in) = ADP + phosphate + 5 H(+)(out). Its function is as follows. Produces ATP from ADP in the presence of a proton gradient across the membrane. The alpha chain is a regulatory subunit. This is ATP synthase subunit alpha from Cutibacterium acnes (strain DSM 16379 / KPA171202) (Propionibacterium acnes).